We begin with the raw amino-acid sequence, 228 residues long: MRRVILPLVMTVTLCLAQEASEACTKALTDCENDLECQNRLAPLMAACSTNTCQPQCRSAVLNVYQNKLGRILLRSDATCIPGRDELRTCNFLPAESTVHCSLGKLACEGDLQCNSKFGVFMSECEADAARGACTDKCKTLLNQTIETSVGSVFSNCTCTARDDQLCTNLKDNLLGVCLKNTPGVTLSPSDNSITDAPGGNDLADSSVGHGFNILSAISVYLLTVLVF.

Residues Met-1–Ala-17 form the signal peptide. 2 N-linked (GlcNAc...) asparagine glycosylation sites follow: Asn-143 and Asn-156. Asp-205 carries the GPI-anchor amidated aspartate lipid modification. The propeptide at Ser-206–Phe-228 is removed in mature form.

Pharynx muscle cells from its early formation, in the two-fold embryo, until the adult stage.

It is found in the cell membrane. Role in pharynx function or development. The chain is Growth arrest-specific protein 1 homolog (phg-1) from Caenorhabditis elegans.